The following is an 802-amino-acid chain: MAARLRPLALRLLARTFPLVARGFSDETLEKAAKSEGYCSRILRAQGTRREGYNEFSLRVEGDPEFYKPGNSYRVTLSAATPAYFRGFTLIALKEGKEGDKEEDHAGTFQIIDEEETQFMSNCPVAVTESTPRRRTRIQVFWTAPPTGTGCVILKASIVQKRIIYFQDEGSLTKRICEQDSASEGVTDKPTLDCCACGTAKYRLTFYGNWSEKTHPKDFPRRTNHWSAIIGSSHSKNYILWEYGGYASEGVKQVAELGSPVKMEEEIRQQSDEVLTVIKAKAQWPAWQPLNVRAAPSAEFSVDRHRHLMSFLTMLGPSPDWNVGLSAEDLCTKDCGWVQKVVQDLIPWDAGTDSGVTYESPNKPTVPQEKIRPLTSLDHPQSPFYDPEGGSIKLVARVVLERIARKGEQCNFVPDNIDDIVADLAPEEKEEDDTPETCIYSNWSPWSACSSSTCEKGKRMRQRMLKAQLDLSVPCPDTQDFQPCMGPGCSDEDGSTCMMSDWITWSPCSVSCGMGTRSRERYVKQFPEDGSMCKVPTEETEKCIVNEECSPSSCLVTEWGEWDECSASCGTGMKRRHRMIKMTPADGSMCKAETTEAEKCMMPECHTIPCLLSPWSEWSDCSVTCGKGMRTRQRMLKSAAELGDCNEELEQAEKCMLPECPIDCELTEWSQWSECNTSCGKGHMIRTRMIKIEPQFGGTACPETVQRTKCRVRKCLRGPGMEKRRWKEAREKRRSEQAKKNIDNEQYPVCRLKPWTAWTECSTLCGGGIQERYMMVKKRSKSTQFTSCKDKKELRACNVHPC.

Positions 1 to 23 (MAARLRPLALRLLARTFPLVARG) are cleaved as a signal peptide. One can recognise a Reelin domain in the interval 24–189 (FSDETLEKAA…DSASEGVTDK (166 aa)). Intrachain disulfides connect C39–C123, C151–C177, C194–C331, C195–C335, C197–C410, C438–C475, C449–C484, C454–C489, C497–C533, C508–C512, C543–C549, C554–C590, C565–C569, C600–C605, C610–C645, C621–C625, and C655–C660. In terms of domain architecture, Spondin spans 190 to 383 (PTLDCCACGT…LTSLDHPQSP (194 aa)). An N-linked (GlcNAc...) asparagine glycan is attached at N209. Ca(2+) is bound by residues D320, D349, and D353. 6 TSP type-1 domains span residues 437–490 (TCIY…PGCS), 496–550 (TCMM…EECS), 553–606 (SCLV…PECH), 609–661 (PCLL…PECP), 663–716 (DCEL…RKCL), and 749–801 (VCRL…NVHP). Residue N676 is glycosylated (N-linked (GlcNAc...) asparagine).

It localises to the secreted. Its subcellular location is the extracellular space. The protein localises to the extracellular matrix. Cell adhesion protein that promotes the attachment of spinal cord and sensory neuron cells and the outgrowth of neurites in vitro. May contribute to the growth and guidance of axons in both the spinal cord and the PNS. Somite-derived spondin 1 is an inhibitory signal involved in patterning the segmental migration of neural crest cells and their topographical segregation within the rostral somites in vitro. May be required to prevent the lateral drifting of the commissural axons after having crossed the floor plate. The polypeptide is Spondin-1 (SPON1) (Gallus gallus (Chicken)).